The sequence spans 377 residues: Opsin-5 (377 aa).

At 1-33 (MALNHTALPQDERLPHYLRDEDPFASKLSWEAD) the chain is on the extracellular side. Asn4 carries N-linked (GlcNAc...) asparagine glycosylation. The chain crosses the membrane as a helical span at residues 34-54 (LVAGFYLTIIGILSTFGNGYV). Residues 55 to 74 (LYMSSRRKKKLRPAEIMTIN) lie on the Cytoplasmic side of the membrane. A helical transmembrane segment spans residues 75-95 (LAVCDLGISVVGKPFTIISCF). At 96-108 (CHRWVFGWFGCRW) the chain is on the extracellular side. Cys106 and Cys183 are joined by a disulfide. A helical membrane pass occupies residues 109-129 (YGWAGFFFGCGSLITMTAVSL). At 130–150 (DRYLKICYLSYGVWLKRKHAY) the chain is on the cytoplasmic side. A helical membrane pass occupies residues 151-171 (ICLAVIWAYASFWTTMPLVGL). The Extracellular segment spans residues 172 to 197 (GDYAPEPFGTSCTLDWWLAQASGGGQ). Residues 198 to 218 (VFILSILFFCLLLPTAVIVFS) form a helical membrane-spanning segment. The Cytoplasmic portion of the chain corresponds to 219 to 252 (YAKIIAKVKSSSKEVAHFDSRIHSSHVLEVKLTK). The chain crosses the membrane as a helical span at residues 253–273 (VAMLICAGFLIAWIPYAVVSV). At 274–288 (WSAFGRPDSIPIQLS) the chain is on the extracellular side. Residues 289 to 309 (VVPTLLAKSAAMYNPIIYQVI) form a helical membrane-spanning segment. Lys296 is modified (N6-(retinylidene)lysine). Topologically, residues 310–377 (DYRFACCQAG…HSNDGDCGKK (68 aa)) are cytoplasmic. Residues Cys315 and Cys316 are each lipidated (S-palmitoyl cysteine). The segment at 357 to 377 (FTSAHVMDGESHSNDGDCGKK) is disordered. Residues 363–377 (MDGESHSNDGDCGKK) show a composition bias toward basic and acidic residues.

The protein belongs to the G-protein coupled receptor 1 family. Opsin subfamily. Post-translationally, it is uncertain whether Cys-315 or Cys-316 is palmitoylated. In terms of tissue distribution, expressed in the brain (at protein level). Weakly expressed in the skin and liver (at protein level). Abundantly expressed in striated muscle cells. Expressed in Math7/Atok7-dependent retinal ganglion cells in the ganglion cell layer (at protein level). Additionally expressed in horizontal and amacrine cells in the inner nuclear layer of the retina (at protein level). Expressed around the base of hair follicles and in epidermal and sebaceous gland cells of the outer ear (at protein level). Abundantly expressed in vibrissae hair follicles and weakly expressed in the vibrissae skin pad, dorsal back skin, and tail.

The protein resides in the cell membrane. Functionally, G-protein coupled receptor which selectively activates G(i) type G proteins via ultraviolet A (UVA) light-mediated activation in the retina. Preferentially binds the chromophore 11-cis retinal and is a bistable protein that displays emission peaks at 380 nm (UVA light) and 470 nm (blue light). Required for the light-response in the inner plexiform layer, and contributes to the regulation of the light-response in the nerve fiber layer, via phosphorylated DAT/SLC6A3 dopamine uptake. Involved in local corneal and retinal circadian rhythm photoentrainment via modulation of the UVA light-induced phase-shift of the retina clock. Acts as a circadian photoreceptor in the outer ear and vibrissal pads, via modulation of circadian clock-gene expression in response to violet light during the light-to-dark transition phase and night phase of the circadian cycle. Required in the retina to negatively regulate hyaloid vessel regression during postnatal development via light-dependent OPN5-SLC32A1-DRD2-VEGFR2 signaling. Involved in the light-dependent regulation of retina and vitreous compartment dopamine levels. The polypeptide is Opsin-5 (Opn5) (Mus musculus (Mouse)).